The primary structure comprises 270 residues: Sorting nexin-11 (270 aa).

Residues 16–132 (VITVRVQDPR…HLFLQSQLSV (117 aa)) enclose the PX domain. A 1,2-diacyl-sn-glycero-3-phospho-(1D-myo-inositol-3-phosphate) is bound by residues arginine 59, lysine 85, and arginine 99. The segment at 135 to 139 (IEACV) is important for membrane trafficking. Basic and acidic residues predominate over residues 168–177 (SSSHLAKGDQ). The segment at 168–203 (SSSHLAKGDQPKSCCFLPRSGRRSSPSPPPSEEKDH) is disordered.

It belongs to the sorting nexin family. Monomer. Interacts with TRPV3; this interaction promotes TRPV3 trafficking from the cell membrane to lysosome for degradation.

The protein localises to the cell membrane. It localises to the endosome. The protein resides in the cytoplasm. Phosphoinositide-binding protein involved in protein sorting and membrane trafficking in endosomes. Regulates the levels of TRPV3 by promoting its trafficking from the cell membrane to lysosome for degradation. The sequence is that of Sorting nexin-11 (SNX11) from Homo sapiens (Human).